Reading from the N-terminus, the 437-residue chain is 3-phosphoshikimate 1-carboxyvinyltransferase (437 aa).

Residues Lys24, Ser25, and Arg29 each contribute to the 3-phosphoshikimate site. Lys24 provides a ligand contact to phosphoenolpyruvate. 2 residues coordinate phosphoenolpyruvate: Gly95 and Arg123. 3-phosphoshikimate is bound by residues Ser168, Gln170, Asp317, and Lys344. Gln170 contributes to the phosphoenolpyruvate binding site. Asp317 serves as the catalytic Proton acceptor. Residues Arg348 and Arg390 each contribute to the phosphoenolpyruvate site.

The protein belongs to the EPSP synthase family. Monomer.

It is found in the cytoplasm. It catalyses the reaction 3-phosphoshikimate + phosphoenolpyruvate = 5-O-(1-carboxyvinyl)-3-phosphoshikimate + phosphate. The protein operates within metabolic intermediate biosynthesis; chorismate biosynthesis; chorismate from D-erythrose 4-phosphate and phosphoenolpyruvate: step 6/7. Functionally, catalyzes the transfer of the enolpyruvyl moiety of phosphoenolpyruvate (PEP) to the 5-hydroxyl of shikimate-3-phosphate (S3P) to produce enolpyruvyl shikimate-3-phosphate and inorganic phosphate. The sequence is that of 3-phosphoshikimate 1-carboxyvinyltransferase from Wolinella succinogenes (strain ATCC 29543 / DSM 1740 / CCUG 13145 / JCM 31913 / LMG 7466 / NCTC 11488 / FDC 602W) (Vibrio succinogenes).